The primary structure comprises 510 residues: Pectinesterase 2 (510 aa).

An N-terminal signal peptide occupies residues 1-19 (MALRILITVSLVLFSLSHT). Asn110 and Asn158 each carry an N-linked (GlcNAc...) asparagine glycan. Positions 275 and 305 each coordinate substrate. Asp328 (proton donor) is an active-site residue. Cys342 and Cys362 are oxidised to a cystine. Catalysis depends on Asp349, which acts as the Nucleophile. 2 N-linked (GlcNAc...) asparagine glycosylation sites follow: Asn371 and Asn385. Positions 416 and 418 each coordinate substrate.

The protein in the N-terminal section; belongs to the PMEI family. This sequence in the C-terminal section; belongs to the pectinesterase family. In terms of tissue distribution, expressed at low levels in young leaves, young bark, young fruit, mature fruit vesicles, shoots and flower buds, young bark and juice vesicles. In both leaf and fruit abscission zones, and mature leaves, expression was initially undetectable but increased markedly following ethylene treatment.

It is found in the secreted. Its subcellular location is the cell wall. It catalyses the reaction [(1-&gt;4)-alpha-D-galacturonosyl methyl ester](n) + n H2O = [(1-&gt;4)-alpha-D-galacturonosyl](n) + n methanol + n H(+). Its pathway is glycan metabolism; pectin degradation; 2-dehydro-3-deoxy-D-gluconate from pectin: step 1/5. In terms of biological role, acts in the modification of cell walls via demethylesterification of cell wall pectin. The protein is Pectinesterase 2 (PECS-2.1) of Citrus sinensis (Sweet orange).